The following is a 123-amino-acid chain: Small ribosomal subunit protein uS12 (123 aa).

The disordered stretch occupies residues 1-32; the sequence is MPTINQLVRHGRKRSVKKTNTPALKASPQKRG. Asp-89 carries the 3-methylthioaspartic acid modification.

Belongs to the universal ribosomal protein uS12 family. As to quaternary structure, part of the 30S ribosomal subunit. Contacts proteins S8 and S17. May interact with IF1 in the 30S initiation complex.

With S4 and S5 plays an important role in translational accuracy. Functionally, interacts with and stabilizes bases of the 16S rRNA that are involved in tRNA selection in the A site and with the mRNA backbone. Located at the interface of the 30S and 50S subunits, it traverses the body of the 30S subunit contacting proteins on the other side and probably holding the rRNA structure together. The combined cluster of proteins S8, S12 and S17 appears to hold together the shoulder and platform of the 30S subunit. The sequence is that of Small ribosomal subunit protein uS12 from Desulfatibacillum aliphaticivorans.